The sequence spans 163 residues: DNA endonuclease I-CreI (163 aa).

Mg(2+)-binding residues include glycine 19 and aspartate 20. Interaction with DNA regions lie at residues 26 to 38 (QIKP…FKHQ), 44 to 47 (QVTQ), 68 to 70 (RDR), and 138 to 143 (SKTRKT).

The protein belongs to the LAGLIDADG endonuclease family. Homodimer. Requires Mg(2+) as cofactor. Mn(2+) serves as cofactor. It depends on Co(2+) as a cofactor. Ni(2+) is required as a cofactor. The cofactor is Zn(2+).

It localises to the plastid. The protein resides in the chloroplast. Endonuclease involved in group I intron homing. Recognizes and cleaves a 19-24 bp palindromic DNA site. This Chlamydomonas reinhardtii (Chlamydomonas smithii) protein is DNA endonuclease I-CreI.